We begin with the raw amino-acid sequence, 413 residues long: Serine hydroxymethyltransferase (413 aa).

Residues leucine 117 and 121–123 (GHL) contribute to the (6S)-5,6,7,8-tetrahydrofolate site. Position 226 is an N6-(pyridoxal phosphate)lysine (lysine 226). (6S)-5,6,7,8-tetrahydrofolate contacts are provided by residues glutamate 241 and 349–351 (SPF).

It belongs to the SHMT family. Homodimer. It depends on pyridoxal 5'-phosphate as a cofactor.

It localises to the cytoplasm. It carries out the reaction (6R)-5,10-methylene-5,6,7,8-tetrahydrofolate + glycine + H2O = (6S)-5,6,7,8-tetrahydrofolate + L-serine. It functions in the pathway one-carbon metabolism; tetrahydrofolate interconversion. It participates in amino-acid biosynthesis; glycine biosynthesis; glycine from L-serine: step 1/1. In terms of biological role, catalyzes the reversible interconversion of serine and glycine with tetrahydrofolate (THF) serving as the one-carbon carrier. This reaction serves as the major source of one-carbon groups required for the biosynthesis of purines, thymidylate, methionine, and other important biomolecules. Also exhibits THF-independent aldolase activity toward beta-hydroxyamino acids, producing glycine and aldehydes, via a retro-aldol mechanism. This is Serine hydroxymethyltransferase from Halalkalibacterium halodurans (strain ATCC BAA-125 / DSM 18197 / FERM 7344 / JCM 9153 / C-125) (Bacillus halodurans).